Here is a 141-residue protein sequence, read N- to C-terminus: Lutropin subunit beta (141 aa).

Positions Met-1–Ala-20 are cleaved as a signal peptide. Cystine bridges form between Cys-29–Cys-77, Cys-43–Cys-92, Cys-46–Cys-130, Cys-54–Cys-108, Cys-58–Cys-110, and Cys-113–Cys-120. Asn-33 and Asn-50 each carry an N-linked (GlcNAc...) asparagine glycan.

It belongs to the glycoprotein hormones subunit beta family. In terms of assembly, heterodimer of a common alpha chain and a unique beta chain which confers biological specificity to thyrotropin, lutropin, follitropin and gonadotropin.

The protein resides in the secreted. In terms of biological role, promotes spermatogenesis and ovulation by stimulating the testes and ovaries to synthesize steroids. The chain is Lutropin subunit beta (LHB) from Gorilla gorilla gorilla (Western lowland gorilla).